We begin with the raw amino-acid sequence, 631 residues long: Phosphomethylpyrimidine synthase (631 aa).

Substrate contacts are provided by residues N239, M268, Y297, H333, 353-355 (SRG), 394-397 (DGLR), and E433. H437 contributes to the Zn(2+) binding site. Residue Y460 participates in substrate binding. Zn(2+) is bound at residue H501. Residues C581, C584, and C589 each coordinate [4Fe-4S] cluster.

It belongs to the ThiC family. As to quaternary structure, homodimer. Requires [4Fe-4S] cluster as cofactor.

It carries out the reaction 5-amino-1-(5-phospho-beta-D-ribosyl)imidazole + S-adenosyl-L-methionine = 4-amino-2-methyl-5-(phosphooxymethyl)pyrimidine + CO + 5'-deoxyadenosine + formate + L-methionine + 3 H(+). The protein operates within cofactor biosynthesis; thiamine diphosphate biosynthesis. Catalyzes the synthesis of the hydroxymethylpyrimidine phosphate (HMP-P) moiety of thiamine from aminoimidazole ribotide (AIR) in a radical S-adenosyl-L-methionine (SAM)-dependent reaction. This is Phosphomethylpyrimidine synthase from Shigella flexneri serotype 5b (strain 8401).